A 102-amino-acid chain; its full sequence is uncharacterized protein (102 aa).

Positions methionine 1–threonine 21 are disordered. Residue asparagine 16 is glycosylated (N-linked (GlcNAc...) asparagine). Residues asparagine 24 to threonine 44 traverse the membrane as a helical segment. A disordered region spans residues isoleucine 49–glycine 102. Residues valine 56 to asparagine 73 are compositionally biased toward basic and acidic residues. A glycan (N-linked (GlcNAc...) asparagine) is linked at asparagine 90. A compositionally biased stretch (polar residues) spans glutamate 93–glycine 102.

The protein localises to the membrane. This is an uncharacterized protein from Encephalitozoon cuniculi (strain GB-M1) (Microsporidian parasite).